The following is a 697-amino-acid chain: Probable glutamine--tRNA ligase (697 aa).

Residues proline 204–histidine 214 carry the 'HIGH' region motif. ATP is bound by residues glutamate 205–asparagine 207 and histidine 211–alanine 217. L-glutamine is bound by residues aspartate 237 and tyrosine 386. ATP-binding positions include threonine 405, arginine 434–leucine 435, and leucine 442–lysine 444. Positions valine 441–arginine 445 match the 'KMSKS' region motif.

The protein belongs to the class-I aminoacyl-tRNA synthetase family.

It catalyses the reaction tRNA(Gln) + L-glutamine + ATP = L-glutaminyl-tRNA(Gln) + AMP + diphosphate. This chain is Probable glutamine--tRNA ligase, found in Encephalitozoon cuniculi (strain GB-M1) (Microsporidian parasite).